The following is a 617-amino-acid chain: Putative type VI secretion system protein VgrGA (617 aa).

2 disordered regions span residues 325-344 (GQQP…TLSN) and 449-469 (RTFH…TRTS).

It belongs to the VgrG protein family.

Functionally, a Vgr protein that is probably part of a type VI secretion system (T6SS). May be required for export of proteins involved in Rhs-mediated cellular contact-dependent growth inhibition (CDI). The sequence is that of Putative type VI secretion system protein VgrGA (vgrGA) from Dickeya dadantii (strain 3937) (Erwinia chrysanthemi (strain 3937)).